Consider the following 309-residue polypeptide: Postacrosomal sheath WW domain-binding protein (309 aa).

The GRAM domain occupies 45-87; that stretch reads GRKTGTLFLTSYRVIFITSCSISDPMLSFMMPFDLMTNLTVEQ. A run of 10 repeats spans residues 175–181, 182–188, 189–195, 217–223, 224–230, 231–237, 238–244, 245–251, 252–258, and 259–265. Residues 175-265 are 10 X 7 AA tandem repeat of Y-G-X-P-P-X-G; sequence YGAPPAGYGA…PLGYGAPPAG (91 aa). The PPxY motif signature appears at 186–189; the sequence is PPGY. The segment covering 251-272 has biased composition (low complexity); it reads GYGAPPLGYGAPPAGNEGPPAG. Residues 251 to 309 are disordered; the sequence is GYGAPPLGYGAPPAGNEGPPAGYRASPAGSGARPQESTAAQAPENEASLPSASSSQVHS. A compositionally biased stretch (polar residues) spans 298–309; that stretch reads SLPSASSSQVHS.

As to expression, expressed in testis.

Functionally, may play a role in meiotic resumption and pronuclear formation, mediated by a WW domain-signaling pathway during fertilization. The protein is Postacrosomal sheath WW domain-binding protein (WBP2NL) of Homo sapiens (Human).